Consider the following 885-residue polypeptide: Lon protease homolog 2, peroxisomal (885 aa).

The region spanning 12–256 (LAVLPFRNKV…KATELVDRHL (245 aa)) is the Lon N-terminal domain. A disordered region spans residues 70-104 (LLSPGVGSDSGEGGSKVGGSAVESSKQDTKNGKEP). Residues 77 to 86 (SDSGEGGSKV) show a composition bias toward gly residues. Residues 94–104 (SKQDTKNGKEP) show a composition bias toward basic and acidic residues. ATP is bound at residue 409–416 (GPPGVGKT). The 186-residue stretch at 690-875 (VASPGVSVGL…EEVLDHAFEG (186 aa)) folds into the Lon proteolytic domain. Active-site residues include S781 and K824. Positions 883-885 (SKL) match the Microbody targeting signal motif.

It belongs to the peptidase S16 family.

Its subcellular location is the peroxisome matrix. It carries out the reaction Hydrolysis of proteins in presence of ATP.. ATP-dependent serine protease that mediates the selective degradation of misfolded and unassembled polypeptides in the peroxisomal matrix. Necessary for type 2 peroxisome targeting signal (PTS2)-containing protein processing and facilitates peroxisome matrix protein import. This chain is Lon protease homolog 2, peroxisomal (LON1), found in Zea mays (Maize).